The chain runs to 421 residues: Probable 26S proteasome regulatory subunit rpn6 (421 aa).

In terms of domain architecture, PCI spans 221–390; it reads DFKTAYSYFY…GCLIVYDEPQ (170 aa).

It belongs to the proteasome subunit S9 family. In terms of assembly, component of the lid subcomplex of the 19S proteasome regulatory particle complex (also named PA700 complex). The 26S proteasome consists of a 20S proteasome core and two 19S regulatory subunits.

Functionally, component of the lid subcomplex of the 26S proteasome, a multiprotein complex involved in the ATP-dependent degradation of ubiquitinated proteins. In the complex, rpn6 is required for proteasome assembly. The polypeptide is Probable 26S proteasome regulatory subunit rpn6 (rpn6) (Schizosaccharomyces pombe (strain 972 / ATCC 24843) (Fission yeast)).